Consider the following 376-residue polypeptide: Transcriptional regulator STP4 (376 aa).

3 disordered regions span residues 25 to 58 (QNYC…PHAS), 89 to 122 (SSNS…SNSS), and 137 to 210 (VNCI…NWKP). 2 stretches are compositionally biased toward low complexity: residues 32-50 (SPSP…TSPP) and 89-103 (SSNS…YSPT). Composition is skewed to polar residues over residues 146–183 (PRST…LSVK) and 191–200 (EPQNSNTIIS). The C2H2-type zinc-finger motif lies at 241–263 (HICKYCERGFARPNDLFRHVKCH).

The protein resides in the nucleus. Functionally, probable transcription factor involved in response to cell wall damage. The sequence is that of Transcriptional regulator STP4 (STP4) from Candida albicans (strain SC5314 / ATCC MYA-2876) (Yeast).